Here is a 313-residue protein sequence, read N- to C-terminus: Adhesin MafA 2/3 (313 aa).

An N-terminal signal peptide occupies residues 1–14; sequence MKTLLLLIPLVLTA. Cys-15 carries N-palmitoyl cysteine lipidation. Residue Cys-15 is the site of S-diacylglycerol cysteine attachment. Residues 282 to 298 are compositionally biased toward polar residues; sequence GDTTAQNRPDFKQNNGK. The interval 282 to 313 is disordered; that stretch reads GDTTAQNRPDFKQNNGKNPDVGNEVIRRRKGG.

The protein belongs to the MafA family.

Its subcellular location is the cell outer membrane. The sequence is that of Adhesin MafA 2/3 (mafA2) from Neisseria gonorrhoeae (strain ATCC 700825 / FA 1090).